We begin with the raw amino-acid sequence, 150 residues long: Ribonuclease K6 (150 aa).

The signal sequence occupies residues methionine 1 to alanine 23. The Proton acceptor role is filled by histidine 38. 4 disulfides stabilise this stretch: cysteine 46/cysteine 104, cysteine 60/cysteine 114, cysteine 78/cysteine 129, and cysteine 85/cysteine 92. Residue asparagine 55 is glycosylated (N-linked (GlcNAc...) asparagine). Substrate contacts are provided by residues lysine 61–threonine 65 and lysine 86. N-linked (GlcNAc...) asparagine glycosylation occurs at asparagine 100. Arginine 105 serves as a coordination point for substrate. The active-site Proton donor is the histidine 145.

This sequence belongs to the pancreatic ribonuclease family. As to quaternary structure, interacts (via N-terminus) with bacterial lipopolysaccharide (LPS).

The protein localises to the secreted. It is found in the lysosome. Its subcellular location is the cytoplasmic granule. Functionally, ribonuclease which shows a preference for the pyrimidines uridine and cytosine. Has potent antibacterial activity against a range of Gram-positive and Gram-negative bacteria, including P.aeruginosa, A.baumanii, M.luteus, S.aureus, E.faecalis, E.faecium, S.saprophyticus and E.coli. Causes loss of bacterial membrane integrity, and also promotes agglutination of Gram-negative bacteria. Probably contributes to urinary tract sterility. Bactericidal activity is independent of RNase activity. The protein is Ribonuclease K6 (RNASE6) of Pongo pygmaeus (Bornean orangutan).